The primary structure comprises 180 residues: Small ribosomal subunit protein uS4 (180 aa).

The S4 RNA-binding domain occupies 103-174 (RRLQTIVYKK…HPERMMIEKA (72 aa)).

Belongs to the universal ribosomal protein uS4 family. As to quaternary structure, part of the 30S ribosomal subunit. Contacts protein S5. The interaction surface between S4 and S5 is involved in control of translational fidelity.

In terms of biological role, one of the primary rRNA binding proteins, it binds directly to 16S rRNA where it nucleates assembly of the body of the 30S subunit. With S5 and S12 plays an important role in translational accuracy. The protein is Small ribosomal subunit protein uS4 of Pyrococcus abyssi (strain GE5 / Orsay).